Consider the following 614-residue polypeptide: MRPPWYPLHTPSLASPLLFLLLSLLGGGARAEGREDPQLLVRVRGGQLRGIRLKAPGGPVSAFLGIPFAEPPVGSRRFMPPEPKRPWSGILDATTFQNVCYQYVDTLYPGFEGTEMWNPNRELSEDCLYLNVWTPYPRPTSPTPVLIWIYGGGFYSGASSLDVYDGRFLAQVEGTVLVSMNYRVGTFGFLALPGSREAPGNVGLLDQRLALQWVQENIAAFGGDPMSVTLFGESAGAASVGMHILSLPSRSLFHRAVLQSGTPNGPWATVSAGEARRRATLLARLVGCPPGGAGGNDTELISCLRTRPAQDLVDHEWHVLPQESIFRFSFVPVVDGDFLSDTPDALINTGDFQDLQVLVGVVKDEGSYFLVYGVPGFSKDNESLISRAQFLAGVRIGVPQASDLAAEAVVLHYTDWLHPEDPAHLRDAMSAVVGDHNVVCPVAQLAGRLAAQGARVYAYIFEHRASTLTWPLWMGVPHGYEIEFIFGLPLDPSLNYTVEERIFAQRLMQYWTNFARTGDPNDPRDSKSPRWPPYTTAAQQYVSLNLKPLEVRRGLRAQTCAFWNRFLPKLLSATDTLDEAERQWKAEFHRWSSYMVHWKNQFDHYSKQERCSDL.

A signal peptide spans 1–31; it reads MRPPWYPLHTPSLASPLLFLLLSLLGGGARA. An intrachain disulfide couples cysteine 100 to cysteine 127. Serine 234 (acyl-ester intermediate) is an active-site residue. An intrachain disulfide couples cysteine 288 to cysteine 303. An N-linked (GlcNAc...) asparagine glycan is attached at asparagine 296. Glutamate 365 (charge relay system) is an active-site residue. N-linked (GlcNAc...) asparagine glycosylation is present at asparagine 381. Cysteines 440 and 560 form a disulfide. The active-site Charge relay system is histidine 478. N-linked (GlcNAc...) asparagine glycosylation is present at asparagine 495.

Belongs to the type-B carboxylesterase/lipase family. As to quaternary structure, homotetramer; composed of disulfide-linked homodimers. Catalytic forms H (GPI-anchor dimer) and T (asymmetric collagen-tailed), which differ in their C-terminus, account for all types of known ACHE forms. Interacts with PRIMA1. The interaction with PRIMA1 is required to anchor it to the basal lamina of cells and organize into tetramers. As to expression, has been found in central nervous system and muscle. Found in embryonic liver and spleen but not in adult liver.

Its subcellular location is the synapse. It localises to the secreted. The protein localises to the cell membrane. It catalyses the reaction acetylcholine + H2O = choline + acetate + H(+). Functionally, terminates signal transduction at the neuromuscular junction by rapid hydrolysis of the acetylcholine released into the synaptic cleft. In Rattus norvegicus (Rat), this protein is Acetylcholinesterase (Ache).